A 947-amino-acid chain; its full sequence is Netrin receptor unc-5 (947 aa).

Residues 43–141 (VIRNKPLRLQ…VHLAYMRKHF (99 aa)) form the Ig-like domain. Intrachain disulfides connect cysteine 53–cysteine 112, cysteine 160–cysteine 209, cysteine 243–cysteine 295, cysteine 247–cysteine 299, and cysteine 273–cysteine 285. The region spanning 139–226 (KHFLKSPVAQ…SRKTDPVEVQ (88 aa)) is the Ig-like C2-type domain. Asparagine 206 is a glycosylation site (N-linked (GlcNAc...) asparagine). TSP type-1 domains are found at residues 230 to 300 (DGGW…VPCK) and 302 to 354 (DGGW…QLCT). C-linked (Man) tryptophan glycosylation is found at tryptophan 305 and tryptophan 308. The chain crosses the membrane as a helical span at residues 369 to 389 (GSVASIFIVASFILAILAMFC). Residues 390–947 (CKRGNSKKSK…LSAFPQIVSP (558 aa)) lie on the Cytoplasmic side of the membrane. Tyrosine 510 bears the Phosphotyrosine mark. One can recognise a ZU5 domain in the interval 530-658 (NIVAAQIDSN…LNTNMFVQFE (129 aa)). One can recognise a Death domain in the interval 857-938 (ELARLLDMPN…DAVMVLERFL (82 aa)).

Belongs to the unc-5 family. In terms of assembly, interacts (via cytoplasmic domain) with src-1 (via SH2 domain and SH3 domain). Interacts with madd-4. Interacts with unc-129; the interaction is direct. In terms of processing, phosphorylated on different cytoplasmic tyrosine residues. May be phosphorylated on tyrosine residues by src-1. Tyrosine phosphorylation is unc-6-dependent. Glycosylated via C-mannosylation by dpy-19 at Trp-305 and Trp-308. Expressed in cell bodies and axons of the VNC motor neurons that extend axons to the dorsal midline and within the ventral nerve cord. Expressed in gonadal distal tip cells (DTC).

It is found in the cell membrane. The protein resides in the membrane raft. It localises to the cell projection. Its subcellular location is the neuron projection. Its function is as follows. Receptor for netrin (unc-6) required for axon guidance. Mediates axon repulsion of neuronal growth cones in the developing nervous system upon ligand binding. Axon migration is mediated by the secreted unc-6, which promotes attraction of neurons and axons through binding to the unc-40 receptor, while repulsion requires both unc-5 and unc-40 receptors. Involved in the ventral-dorsal and anterior-posterior migration of distal tip cells along the body, which may be mediated by Wnt receptor mom-5, ced-10/Rac, ced-12/ELMO and mig-2/RhoG. This chain is Netrin receptor unc-5, found in Caenorhabditis elegans.